We begin with the raw amino-acid sequence, 542 residues long: CTP synthase (542 aa).

The amidoligase domain stretch occupies residues 1–265 (MARYIFITGG…DDEVLAAFGL (265 aa)). Serine 13 is a binding site for CTP. Serine 13 contacts UTP. 14–19 (SLGKGL) provides a ligand contact to ATP. Tyrosine 54 is an L-glutamine binding site. Aspartate 71 provides a ligand contact to ATP. Mg(2+) contacts are provided by aspartate 71 and glutamate 139. Residues 146-148 (DIE), 186-191 (KTKPTQ), and lysine 222 contribute to the CTP site. Residues 186–191 (KTKPTQ) and lysine 222 each bind UTP. An ATP-binding site is contributed by 238-240 (RDA). A Glutamine amidotransferase type-1 domain is found at 290–541 (TIAIVGKYTG…IQAAVVQSRL (252 aa)). Glycine 352 contributes to the L-glutamine binding site. The active-site Nucleophile; for glutamine hydrolysis is cysteine 379. Residues 380–383 (FGMQ), glutamate 403, and arginine 469 each bind L-glutamine. Residues histidine 514 and glutamate 516 contribute to the active site.

The protein belongs to the CTP synthase family. As to quaternary structure, homotetramer.

The enzyme catalyses UTP + L-glutamine + ATP + H2O = CTP + L-glutamate + ADP + phosphate + 2 H(+). It carries out the reaction L-glutamine + H2O = L-glutamate + NH4(+). The catalysed reaction is UTP + NH4(+) + ATP = CTP + ADP + phosphate + 2 H(+). Its pathway is pyrimidine metabolism; CTP biosynthesis via de novo pathway; CTP from UDP: step 2/2. With respect to regulation, allosterically activated by GTP, when glutamine is the substrate; GTP has no effect on the reaction when ammonia is the substrate. The allosteric effector GTP functions by stabilizing the protein conformation that binds the tetrahedral intermediate(s) formed during glutamine hydrolysis. Inhibited by the product CTP, via allosteric rather than competitive inhibition. In terms of biological role, catalyzes the ATP-dependent amination of UTP to CTP with either L-glutamine or ammonia as the source of nitrogen. Regulates intracellular CTP levels through interactions with the four ribonucleotide triphosphates. In Nitrobacter hamburgensis (strain DSM 10229 / NCIMB 13809 / X14), this protein is CTP synthase.